Here is a 447-residue protein sequence, read N- to C-terminus: Na(+)-translocating NADH-quinone reductase subunit A (447 aa).

It belongs to the NqrA family. In terms of assembly, composed of six subunits; NqrA, NqrB, NqrC, NqrD, NqrE and NqrF.

The enzyme catalyses a ubiquinone + n Na(+)(in) + NADH + H(+) = a ubiquinol + n Na(+)(out) + NAD(+). Functionally, NQR complex catalyzes the reduction of ubiquinone-1 to ubiquinol by two successive reactions, coupled with the transport of Na(+) ions from the cytoplasm to the periplasm. NqrA to NqrE are probably involved in the second step, the conversion of ubisemiquinone to ubiquinol. This Tolumonas auensis (strain DSM 9187 / NBRC 110442 / TA 4) protein is Na(+)-translocating NADH-quinone reductase subunit A.